The primary structure comprises 129 residues: M-zodatoxin-Lt8f (129 aa).

The signal sequence occupies residues 1–20 (MKYFVVALALVAAFACIAES). A propeptide spanning residues 21–60 (KPAESEHELAEVEEENELADLEDAVWLEHLADLSDLEEAR) is cleaved from the precursor. Residues 57 to 60 (EEAR) carry the Processing quadruplet motif motif.

Post-translationally, cleavage of the propeptide depends on the processing quadruplet motif (XXXR, with at least one of X being E). As to expression, expressed by the venom gland.

The protein resides in the secreted. Its function is as follows. Insecticidal, cytolytic and antimicrobial peptide. Has insecticidal activity against the flesh fly S.carnaria. Has antibacterial activity against the Gram-negative bacteria E.coli. Forms voltage-dependent, ion-permeable channels in membranes. At high concentration causes cell membrane lysis. The sequence is that of M-zodatoxin-Lt8f (cit 1-7) from Lachesana tarabaevi (Spider).